The sequence spans 242 residues: Probable transcriptional regulatory protein MHP7448_0474 (242 aa).

This sequence belongs to the TACO1 family.

The protein resides in the cytoplasm. This Mesomycoplasma hyopneumoniae (strain 7448) (Mycoplasma hyopneumoniae) protein is Probable transcriptional regulatory protein MHP7448_0474.